The following is a 258-amino-acid chain: MLAKRIIPCLDVRQGQVVKGVQFRNHEIIGGIVPLVCRYAEEGADELVFYDITASADARVVDKRWIADVAEVIDIPFCVAGGIQSVAQAGEILSYGADKISINSPALADPTLISRLADRFGVQCIVVGIDTWFDAASGRYQVNQYTGDETRTHITPWQTLDWIEEVQRRGAGELVLNMMNQDGVRNGYDLMQLRQVRERCHVPLIASGGAGTMAHFLSAFRDAQVDGALAASVFHKQIINIGELKQFLAAEGVEIRLC.

Active-site residues include Asp11 and Asp130.

This sequence belongs to the HisA/HisF family. As to quaternary structure, heterodimer of HisH and HisF.

It is found in the cytoplasm. It carries out the reaction 5-[(5-phospho-1-deoxy-D-ribulos-1-ylimino)methylamino]-1-(5-phospho-beta-D-ribosyl)imidazole-4-carboxamide + L-glutamine = D-erythro-1-(imidazol-4-yl)glycerol 3-phosphate + 5-amino-1-(5-phospho-beta-D-ribosyl)imidazole-4-carboxamide + L-glutamate + H(+). The protein operates within amino-acid biosynthesis; L-histidine biosynthesis; L-histidine from 5-phospho-alpha-D-ribose 1-diphosphate: step 5/9. IGPS catalyzes the conversion of PRFAR and glutamine to IGP, AICAR and glutamate. The HisF subunit catalyzes the cyclization activity that produces IGP and AICAR from PRFAR using the ammonia provided by the HisH subunit. This Sodalis glossinidius (strain morsitans) protein is Imidazole glycerol phosphate synthase subunit HisF.